A 248-amino-acid polypeptide reads, in one-letter code: tRNA (guanine-N(1)-)-methyltransferase (248 aa).

Residues G113 and 133–138 (IGDFVL) each bind S-adenosyl-L-methionine.

It belongs to the RNA methyltransferase TrmD family. In terms of assembly, homodimer.

The protein localises to the cytoplasm. It catalyses the reaction guanosine(37) in tRNA + S-adenosyl-L-methionine = N(1)-methylguanosine(37) in tRNA + S-adenosyl-L-homocysteine + H(+). Specifically methylates guanosine-37 in various tRNAs. The sequence is that of tRNA (guanine-N(1)-)-methyltransferase from Dehalococcoides mccartyi (strain ATCC BAA-2266 / KCTC 15142 / 195) (Dehalococcoides ethenogenes (strain 195)).